Here is an 821-residue protein sequence, read N- to C-terminus: Leucine--tRNA ligase (821 aa).

The 'HIGH' region motif lies at 40–50 (PYPSGRIHMGH). A 'KMSKS' region motif is present at residues 586–590 (KMSKS). Residue Lys-589 coordinates ATP.

Belongs to the class-I aminoacyl-tRNA synthetase family.

The protein resides in the cytoplasm. It carries out the reaction tRNA(Leu) + L-leucine + ATP = L-leucyl-tRNA(Leu) + AMP + diphosphate. In Aliarcobacter butzleri (strain RM4018) (Arcobacter butzleri), this protein is Leucine--tRNA ligase.